The following is a 309-amino-acid chain: Methionyl-tRNA formyltransferase (309 aa).

109–112 (SLLP) contacts (6S)-5,6,7,8-tetrahydrofolate.

Belongs to the Fmt family.

The enzyme catalyses L-methionyl-tRNA(fMet) + (6R)-10-formyltetrahydrofolate = N-formyl-L-methionyl-tRNA(fMet) + (6S)-5,6,7,8-tetrahydrofolate + H(+). Its function is as follows. Attaches a formyl group to the free amino group of methionyl-tRNA(fMet). The formyl group appears to play a dual role in the initiator identity of N-formylmethionyl-tRNA by promoting its recognition by IF2 and preventing the misappropriation of this tRNA by the elongation apparatus. The chain is Methionyl-tRNA formyltransferase from Clostridioides difficile (strain 630) (Peptoclostridium difficile).